The primary structure comprises 1162 residues: Glycerophosphocholine phosphodiesterase GDE1 (1162 aa).

An SPX domain is found at 1–155 (MKFGKTYVTH…TSILSQHSGV (155 aa)). 6 ANK repeats span residues 346 to 375 (YHRT…KWGL), 392 to 421 (EGLT…AQTL), 423 to 452 (CPNL…DVNY), 458 to 487 (RNET…NTEI), 492 to 521 (FGWT…SYDI), and 525 to 554 (SGWL…KLLL). The region spanning 817-1146 (TRVIGHRGLG…DSVLAVREGL (330 aa)) is the GP-PDE domain.

This sequence belongs to the GDE1 family.

Its subcellular location is the cytoplasm. The enzyme catalyses sn-glycerol 3-phosphocholine + H2O = sn-glycerol 3-phosphate + choline + H(+). Functionally, glycerophosphocholine glycerophosphodiesterase responsible for the hydrolysis of intracellular glycerophosphocholine into glycerol-phosphate and choline. The choline is used for phosphatidyl-choline synthesis. Required for utilization of glycerophosphocholine as phosphate source. C.albicans can utilize GroPCho through transport and intracellular hydrolysis or through extracellular hydrolysis. The sequence is that of Glycerophosphocholine phosphodiesterase GDE1 from Candida albicans (strain SC5314 / ATCC MYA-2876) (Yeast).